A 205-amino-acid chain; its full sequence is Outer-membrane lipoprotein carrier protein (205 aa).

The signal sequence occupies residues 1–22 (MKKIVIVISILLTSFLSSAVSA).

It belongs to the LolA family. As to quaternary structure, monomer.

It localises to the periplasm. Functionally, participates in the translocation of lipoproteins from the inner membrane to the outer membrane. Only forms a complex with a lipoprotein if the residue after the N-terminal Cys is not an aspartate (The Asp acts as a targeting signal to indicate that the lipoprotein should stay in the inner membrane). In Psychromonas ingrahamii (strain DSM 17664 / CCUG 51855 / 37), this protein is Outer-membrane lipoprotein carrier protein.